A 691-amino-acid polypeptide reads, in one-letter code: Solute carrier family 28 member 3 (691 aa).

The tract at residues 1 to 78 (MELRSTAAPR…HMEDDDEEMQ (78 aa)) is disordered. Topologically, residues 1-102 (MELRSTAAPR…FCRKHKTTLR (102 aa)) are cytoplasmic. The span at 21-30 (NEENFLENEN) shows a compositional bias: low complexity. Residues 31-42 (TSGNNSIRSRAV) show a composition bias toward polar residues. The span at 43-54 (QSREHTNTKQDE) shows a compositional bias: basic and acidic residues. The helical transmembrane segment at 103 to 123 (HIIWGILLAGYLVMVISACVL) threads the bilayer. Over 124-128 (NFHRA) the chain is Extracellular. A helical membrane pass occupies residues 129-149 (LPLFVITVAAIFFVVWDHLMA). The Cytoplasmic segment spans residues 150–173 (KYEHRIDEMLSPGRRLLNSHWFWL). Residues 174-194 (KWVIWSSLVLAVIFWLAFDTA) traverse the membrane as a helical segment. Topologically, residues 195–197 (KLG) are extracellular. A helical transmembrane segment spans residues 198–219 (QQQLVSFGGLIMYIVLLFLFSK). At 220–227 (YPTRVYWR) the chain is on the cytoplasmic side. A helical membrane pass occupies residues 228–247 (PVLWGIGLQFLLGLLILRTD). The Extracellular portion of the chain corresponds to 248–284 (PGFIAFDWLGRQVQTFLEYTDAGASFVFGEKYKDHFF). The chain crosses the membrane as a helical span at residues 285-305 (AFKVLPIVVFFSTVMSMLYYL). The Cytoplasmic segment spans residues 306–329 (GLMQWIIRKVGWIMLVTTGSSPIE). The segment at residues 330 to 348 (SVVASGNIFVGQTESPLLV) is an intramembrane region (helical). At 349 to 361 (RPYLPYITKSELH) the chain is on the cytoplasmic side. A helical membrane pass occupies residues 362–384 (AIMTAGFSTIAGSVLGAYISFGV). Residues 385-386 (PS) are Extracellular-facing. Residues 387-408 (SHLLTASVMSAPASLAAAKLFW) traverse the membrane as a helical segment. Topologically, residues 409 to 443 (PETEKPKITLKNAMKMESGDSGNLLEAATQGASSS) are cytoplasmic. Residues 444–469 (ISLVANIAVNLIAFLALLSFMNSALS) form a helical membrane-spanning segment. The Extracellular portion of the chain corresponds to 470-507 (WFGNMFDYPQLSFELICSYIFMPFSFMMGVEWQDSFMV). An intramembrane region (helical) is located at residues 508–527 (ARLIGYKTFFNEFVAYEHLS). At 528–566 (KWIHLRKEGGPKFVNGVQQYISIRSEIIATYALCGFANI) the chain is on the extracellular side. Residues 567 to 577 (GSLGIVIGGLT) traverse the membrane as a helical segment. Over 578 to 590 (SMAPSRKRDIASG) the chain is Cytoplasmic. The chain crosses the membrane as a helical span at residues 591–613 (AVRALIAGTVACFMTACIAGILS). At 614-691 (STPVDINCHH…FNCNGISNTF (78 aa)) the chain is on the extracellular side.

The protein belongs to the concentrative nucleoside transporter (CNT) (TC 2.A.41) family. In terms of assembly, homotrimer. Expressed in pancreas, bone marrow, trachea, mammary gland, liver, prostate, and regions of intestine, brain, lung, placenta, testis, kidney, and heart.

It is found in the cell membrane. It localises to the endoplasmic reticulum membrane. The enzyme catalyses thymidine(out) + 2 Na(+)(out) = thymidine(in) + 2 Na(+)(in). It catalyses the reaction cytidine(out) + 2 Na(+)(out) = cytidine(in) + 2 Na(+)(in). The catalysed reaction is uridine(out) + 2 Na(+)(out) = uridine(in) + 2 Na(+)(in). It carries out the reaction adenosine(out) + 2 Na(+)(out) = adenosine(in) + 2 Na(+)(in). The enzyme catalyses guanosine(out) + 2 Na(+)(out) = guanosine(in) + 2 Na(+)(in). It catalyses the reaction inosine(out) + 2 Na(+)(out) = inosine(in) + 2 Na(+)(in). Its function is as follows. Sodium-dependent, pyrimidine- and purine-selective. Involved in the homeostasis of endogenous nucleosides. Exhibits the transport characteristics of the nucleoside transport system cib or N3 subtype (N3/cib) (with marked transport of both thymidine and inosine). Employs a 2:1 sodium/nucleoside ratio. Transports uridine. Also able to transport gemcitabine, 3'-azido-3'-deoxythymidine (AZT), ribavirin and 3-deazauridine. This Homo sapiens (Human) protein is Solute carrier family 28 member 3 (SLC28A3).